Here is a 312-residue protein sequence, read N- to C-terminus: Ribosomal protein L11 methyltransferase (312 aa).

S-adenosyl-L-methionine is bound by residues Thr-160, Gly-181, Asp-203, and Asn-246.

This sequence belongs to the methyltransferase superfamily. PrmA family.

It localises to the cytoplasm. The catalysed reaction is L-lysyl-[protein] + 3 S-adenosyl-L-methionine = N(6),N(6),N(6)-trimethyl-L-lysyl-[protein] + 3 S-adenosyl-L-homocysteine + 3 H(+). Methylates ribosomal protein L11. The polypeptide is Ribosomal protein L11 methyltransferase (Staphylococcus saprophyticus subsp. saprophyticus (strain ATCC 15305 / DSM 20229 / NCIMB 8711 / NCTC 7292 / S-41)).